The sequence spans 356 residues: Fructose-1,6-bisphosphatase class 1 (356 aa).

Residues 1–26 (MAREWPMTHPSNHPMDHHHQTLQAHL) form a disordered region. Mg(2+) is bound by residues glutamate 101, aspartate 120, leucine 122, and aspartate 123. Substrate-binding positions include 123 to 126 (DGSS) and asparagine 211. Residue glutamate 283 participates in Mg(2+) binding.

The protein belongs to the FBPase class 1 family. Homotetramer. The cofactor is Mg(2+).

The protein resides in the cytoplasm. The catalysed reaction is beta-D-fructose 1,6-bisphosphate + H2O = beta-D-fructose 6-phosphate + phosphate. It functions in the pathway carbohydrate biosynthesis; Calvin cycle. The polypeptide is Fructose-1,6-bisphosphatase class 1 (Bradyrhizobium sp. (strain ORS 278)).